Reading from the N-terminus, the 223-residue chain is 2-phospho-L-lactate guanylyltransferase (223 aa).

Belongs to the CofC family. As to quaternary structure, homodimer.

It catalyses the reaction (2S)-2-phospholactate + GTP + H(+) = (2S)-lactyl-2-diphospho-5'-guanosine + diphosphate. It functions in the pathway cofactor biosynthesis; coenzyme F420 biosynthesis. Guanylyltransferase that catalyzes the activation of (2S)-2-phospholactate (2-PL) as (2S)-lactyl-2-diphospho-5'-guanosine, via the condensation of 2-PL with GTP. It is involved in the biosynthesis of coenzyme F420, a hydride carrier cofactor. The sequence is that of 2-phospho-L-lactate guanylyltransferase from Methanothermobacter thermautotrophicus (strain ATCC 29096 / DSM 1053 / JCM 10044 / NBRC 100330 / Delta H) (Methanobacterium thermoautotrophicum).